Here is a 1883-residue protein sequence, read N- to C-terminus: Zinc finger protein 106 (1883 aa).

Glycyl lysine isopeptide (Lys-Gly) (interchain with G-Cter in SUMO2) cross-links involve residues I6 and K37. The segment at 20 to 44 adopts a C2H2-type 1; atypical zinc-finger fold; that stretch reads HECRVCGVTEVGLSAYAKHISGQLH. Positions 39 to 162 are disordered; sequence ISGQLHKDNV…NGGGPRGRSG (124 aa). Positions 52-67 are enriched in acidic residues; it reads EREDDGKGEEEEEDYF. Glycyl lysine isopeptide (Lys-Gly) (interchain with G-Cter in SUMO2) cross-links involve residues K69 and K76. Basic and acidic residues-rich tracts occupy residues 77–86, 96–116, and 128–138; these read QRKEQSRQDE, SDDRRPQWRREDRIPYQDRES, and PQRDWKWEKDG. A Glycyl lysine isopeptide (Lys-Gly) (interchain with G-Cter in SUMO2) cross-link involves residue K133. Residues 139 to 148 are compositionally biased toward polar residues; sequence FNNTRKNSFP. Residues K243, K287, and K305 each participate in a glycyl lysine isopeptide (Lys-Gly) (interchain with G-Cter in SUMO2) cross-link. A compositionally biased stretch (polar residues) spans 322–338; sequence QTTKQADTATSKVSGKN. Residues 322–356 form a disordered region; sequence QTTKQADTATSKVSGKNGSAAREKPRRWTPYPSQK. Glycyl lysine isopeptide (Lys-Gly) (interchain with G-Cter in SUMO2) cross-links involve residues K356, K365, K371, and K417. A disordered region spans residues 389-423; that stretch reads IQEPQTDETRNSPTQKTQKEIHTGSLNHKASSDSA. The segment covering 412-423 has biased composition (polar residues); sequence GSLNHKASSDSA. S422 is modified (phosphoserine). Residues K451, K461, K477, K492, K505, K515, K525, K539, and K557 each participate in a glycyl lysine isopeptide (Lys-Gly) (interchain with G-Cter in SUMO2) cross-link. The tract at residues 457-501 is disordered; that stretch reads CPATKSLSQKQDPKNISKNTKTNFFSPGEHSNPSNKPTVEDNHGP. Positions 461 to 493 are enriched in polar residues; it reads KSLSQKQDPKNISKNTKTNFFSPGEHSNPSNKP. The segment at 586 to 637 is disordered; the sequence is LEDESDGETSDTEKHGTKIGTLGSATTELLSGSTRTADEKEEDDRILKTSRE. S590 carries the phosphoserine modification. A Glycyl lysine isopeptide (Lys-Gly) (interchain with G-Cter in SUMO2) cross-link involves residue K603. Residues 608–620 show a composition bias toward polar residues; sequence GSATTELLSGSTR. Phosphoserine occurs at positions 641 and 661. Residues K671, K684, K705, K721, K741, K775, and K807 each participate in a glycyl lysine isopeptide (Lys-Gly) (interchain with G-Cter in SUMO2) cross-link. 4 positions are modified to phosphoserine: S859, S861, S864, and S893. Residues 879 to 945 form a disordered region; it reads EEGTGKENEP…HSAQLSSDHI (67 aa). The span at 888–906 shows a compositional bias: polar residues; it reads PQQMVSPSNSLRAGQSQKA. Residues K905 and K911 each participate in a glycyl lysine isopeptide (Lys-Gly) (interchain with G-Cter in SUMO2) cross-link. Phosphoserine is present on S937. Residue K953 forms a Glycyl lysine isopeptide (Lys-Gly) (interchain with G-Cter in SUMO2) linkage. A compositionally biased stretch (polar residues) spans 958–976; that stretch reads QERSIPPSENQNSQESNGE. 4 disordered regions span residues 958–982, 997–1048, 1121–1140, and 1182–1218; these read QERSIPPSENQNSQESNGEGNCLSS, ATDS…KERS, EPSEHPDQVPCSLTRERRNS, and PTFQTHGSVPAPDSSVQIKQEPMSPEQDENVNAVPPS. T1021 bears the Phosphothreonine mark. 3 positions are modified to phosphoserine: S1025, S1026, and S1031. A compositionally biased stretch (basic residues) spans 1035–1045; that stretch reads KNKRRKIKGKK. S1249 carries the post-translational modification Phosphoserine. The tract at residues 1252–1483 is disordered; it reads ESTESFHEPS…EVSSTSEIGT (232 aa). Basic and acidic residues predominate over residues 1255-1277; it reads ESFHEPSQELKFSVEQRNTRNRE. Residue K1265 forms a Glycyl lysine isopeptide (Lys-Gly) (interchain with G-Cter in SUMO2) linkage. 2 stretches are compositionally biased toward polar residues: residues 1278 to 1291 and 1299 to 1312; these read NSPSSQSAGLSSIN and KGNSGSEACTSSFL. 3 positions are modified to phosphoserine: S1279, S1281, and S1284. A Glycyl lysine isopeptide (Lys-Gly) (interchain with G-Cter in SUMO2) cross-link involves residue K1299. The residue at position 1302 (S1302) is a Phosphoserine. K1324 participates in a covalent cross-link: Glycyl lysine isopeptide (Lys-Gly) (interchain with G-Cter in SUMO2). Residue S1328 is modified to Phosphoserine. Polar residues predominate over residues 1333–1346; sequence PEQQAESTLTSAET. Residues 1349–1362 are compositionally biased toward basic residues; it reads SKKKKKLRKKKSLR. The residue at position 1370 (S1370) is a Phosphoserine. T1372 is subject to Phosphothreonine. Residues K1380, K1392, and K1395 each participate in a glycyl lysine isopeptide (Lys-Gly) (interchain with G-Cter in SUMO2) cross-link. 2 stretches are compositionally biased toward basic and acidic residues: residues 1402–1416 and 1444–1456; these read EDSRTGREQESVRDE and GEEKPDSPSKKDI. Residue K1454 forms a Glycyl lysine isopeptide (Lys-Gly) (interchain with G-Cter in SUMO2) linkage. The segment covering 1457–1481 has biased composition (polar residues); that stretch reads WNSTEQNPLETSRSGCDEVSSTSEI. Position 1468 is a phosphoserine (S1468). Residues K1486 and K1504 each participate in a glycyl lysine isopeptide (Lys-Gly) (interchain with G-Cter in SUMO2) cross-link. Over residues 1502-1513 the composition is skewed to polar residues; that stretch reads SIKGSKNSSEIS. The disordered stretch occupies residues 1502–1527; that stretch reads SIKGSKNSSEISSEPGDDDEPTEGSF. 6 WD repeats span residues 1529–1568, 1570–1611, 1654–1695, 1698–1737, 1738–1775, and 1778–1815; these read GHQAAVNAIQIFGNLLYTCSADKTVRVYNLVSRKCIGVFE, HTSK…CVEQ, HGPR…LLRT, GHSKTILCMKVVNDLVFSGSSDQSVHAHNIHTGELVRIYK, GHNHAVTVVNILGKVMVTACLDKFVRVYELQSHDRLQV, and GHKDMIMCMTIHKSMIYTGCYDGSIQAVRLNLMQNYRC. A Glycyl lysine isopeptide (Lys-Gly) (interchain with G-Cter in SUMO2) cross-link involves residue K1585. K1737 is covalently cross-linked (Glycyl lysine isopeptide (Lys-Gly) (interchain with G-Cter in SUMO2)). The segment at 1813–1838 adopts a C2H2-type 2; atypical zinc-finger fold; it reads YRCWWHGCSLIFGVVDHLKQHLLTDH. K1864 participates in a covalent cross-link: Glycyl lysine isopeptide (Lys-Gly) (interchain with G-Cter in SUMO2).

Interacts with KNOP1. Interacts with TARDBP and NUP107. Interacts (via N-terminus) with RBM39. Interacts with the SH3 domains of FYN and GRB2. In terms of processing, phosphorylated by FYN in vitro.

Its subcellular location is the nucleus. It localises to the nucleolus. The protein localises to the nucleus speckle. RNA-binding protein. Specifically binds to 5'-GGGGCC-3' sequence repeats in RNA. Essential for maintenance of peripheral motor neuron and skeletal muscle function. Required for normal expression and/or alternative splicing of a number of genes in spinal cord and skeletal muscle, including the neurite outgrowth inhibitor RTN4. Also contributes to normal mitochondrial respiratory function in motor neurons, via an unknown mechanism. In Homo sapiens (Human), this protein is Zinc finger protein 106 (ZNF106).